A 351-amino-acid chain; its full sequence is Fe-S cluster assembly protein DRE2 (351 aa).

The N-terminal SAM-like domain stretch occupies residues 1–151 (MATTGRVLLL…KPDIGAQQAI (151 aa)). Residues 93-118 (RNRENKPWGLSDGNGNNANSSRRYND) form a disordered region. Polar residues predominate over residues 105-114 (GNGNNANSSR). Residues 152–243 (PLKLGRRRKE…EDELLDEDDM (92 aa)) form a linker region. [2Fe-2S] cluster contacts are provided by Cys253, Cys264, Cys267, and Cys269. Positions 253-269 (CRPKPGKRRRACKDCSC) are fe-S binding site A. Positions 314, 317, 325, and 328 each coordinate [4Fe-4S] cluster. 2 short sequence motifs (cx2C motif) span residues 314–317 (CGNC) and 325–328 (CDGC). Positions 314-328 (CGNCSLGDAFRCDGC) are fe-S binding site B.

It belongs to the anamorsin family. In terms of assembly, monomer. Interacts with TAH18. Interacts with MIA40. Requires [2Fe-2S] cluster as cofactor. [4Fe-4S] cluster serves as cofactor.

It localises to the cytoplasm. It is found in the mitochondrion intermembrane space. Component of the cytosolic iron-sulfur (Fe-S) protein assembly (CIA) machinery required for the maturation of extramitochondrial Fe-S proteins. Part of an electron transfer chain functioning in an early step of cytosolic Fe-S biogenesis, facilitating the de novo assembly of a [4Fe-4S] cluster on the scaffold complex CFD1-NBP35. Electrons are transferred to DRE2 from NADPH via the FAD- and FMN-containing protein TAH18. TAH18-DRE2 are also required for the assembly of the diferric tyrosyl radical cofactor of ribonucleotide reductase (RNR), probably by providing electrons for reduction during radical cofactor maturation in the catalytic small subunit RNR2. In Ajellomyces capsulatus (strain H143) (Darling's disease fungus), this protein is Fe-S cluster assembly protein DRE2.